The sequence spans 107 residues: Thiosulfate sulfurtransferase GlpE (107 aa).

The region spanning 19–107 is the Rhodanese domain; that stretch reads QDLNAVLVDI…WHKAGLPVEK (89 aa). The Cysteine persulfide intermediate role is filled by Cys-67.

Belongs to the GlpE family.

It localises to the cytoplasm. It carries out the reaction thiosulfate + hydrogen cyanide = thiocyanate + sulfite + 2 H(+). The enzyme catalyses thiosulfate + [thioredoxin]-dithiol = [thioredoxin]-disulfide + hydrogen sulfide + sulfite + 2 H(+). In terms of biological role, transferase that catalyzes the transfer of sulfur from thiosulfate to thiophilic acceptors such as cyanide or dithiols. May function in a CysM-independent thiosulfate assimilation pathway by catalyzing the conversion of thiosulfate to sulfite, which can then be used for L-cysteine biosynthesis. This chain is Thiosulfate sulfurtransferase GlpE, found in Aliivibrio fischeri (strain ATCC 700601 / ES114) (Vibrio fischeri).